The sequence spans 280 residues: Energy-coupling factor transporter ATP-binding protein EcfA2 (280 aa).

The ABC transporter domain maps to isoleucine 3–glycine 245. Glycine 40–serine 47 provides a ligand contact to ATP.

This sequence belongs to the ABC transporter superfamily. Energy-coupling factor EcfA family. As to quaternary structure, forms a stable energy-coupling factor (ECF) transporter complex composed of 2 membrane-embedded substrate-binding proteins (S component), 2 ATP-binding proteins (A component) and 2 transmembrane proteins (T component).

It is found in the cell membrane. In terms of biological role, ATP-binding (A) component of a common energy-coupling factor (ECF) ABC-transporter complex. Unlike classic ABC transporters this ECF transporter provides the energy necessary to transport a number of different substrates. This Streptococcus pyogenes serotype M1 protein is Energy-coupling factor transporter ATP-binding protein EcfA2.